Here is a 550-residue protein sequence, read N- to C-terminus: Chaperonin GroEL (550 aa).

ATP contacts are provided by residues 30 to 33, lysine 51, 87 to 91, glycine 415, 479 to 481, and aspartate 495; these read TLGP, DGTTT, and NAA.

This sequence belongs to the chaperonin (HSP60) family. Forms a cylinder of 14 subunits composed of two heptameric rings stacked back-to-back. Interacts with the co-chaperonin GroES.

The protein localises to the cytoplasm. The catalysed reaction is ATP + H2O + a folded polypeptide = ADP + phosphate + an unfolded polypeptide.. Its function is as follows. Together with its co-chaperonin GroES, plays an essential role in assisting protein folding. The GroEL-GroES system forms a nano-cage that allows encapsulation of the non-native substrate proteins and provides a physical environment optimized to promote and accelerate protein folding. The protein is Chaperonin GroEL of Marinobacter nauticus (strain ATCC 700491 / DSM 11845 / VT8) (Marinobacter aquaeolei).